Here is a 248-residue protein sequence, read N- to C-terminus: tRNA (guanine-N(1)-)-methyltransferase (248 aa).

S-adenosyl-L-methionine-binding positions include glycine 113 and 133-138; that span reads IGDYVL.

The protein belongs to the RNA methyltransferase TrmD family. In terms of assembly, homodimer.

Its subcellular location is the cytoplasm. It catalyses the reaction guanosine(37) in tRNA + S-adenosyl-L-methionine = N(1)-methylguanosine(37) in tRNA + S-adenosyl-L-homocysteine + H(+). Functionally, specifically methylates guanosine-37 in various tRNAs. The protein is tRNA (guanine-N(1)-)-methyltransferase of Shewanella loihica (strain ATCC BAA-1088 / PV-4).